The sequence spans 334 residues: MTIIVTGAAGFIGSNIVKALNQRGITDIVAVDNLSKGEKFKNLAECEIAHYLDKHEFIRQVREHILPYQNIEAVFHQGACSDTMNHDGLYMMDNNYQYTLDLLDWCQDERIPFLYASSAAVYGKGEIFREERELEKPLNVYGYSKFLFDQVLRRRMKEGLTAQVVGFRYFNVYGQHEQHKGRMASVAFHHFHQYREHGYVNLFGSNDGYGNGEQTRDFVSVEDVAKVNLYFFDHPELSGIYNLGTGRSQQFNELAAATVNACRAAEGKPEMSLKELVEEELIRYIPFPDALKGKYQSFTQADITKLREAGYKEEFFDVKSGVDRYVKWMLENLA.

Residues 11–12, 32–33, K39, K54, 77–81, and N94 contribute to the NADP(+) site; these read FI, DN, and QGACS. The active-site Proton acceptor is Y141. K145 is an NADP(+) binding site. N171 provides a ligand contact to substrate. Residues V172 and K180 each contribute to the NADP(+) site. Catalysis depends on K180, which acts as the Proton acceptor. Substrate-binding positions include R182, H189, 203–206, R216, and Y295; that span reads FGSN.

This sequence belongs to the NAD(P)-dependent epimerase/dehydratase family. HldD subfamily. Homopentamer. It depends on NADP(+) as a cofactor.

It carries out the reaction ADP-D-glycero-beta-D-manno-heptose = ADP-L-glycero-beta-D-manno-heptose. It participates in nucleotide-sugar biosynthesis; ADP-L-glycero-beta-D-manno-heptose biosynthesis; ADP-L-glycero-beta-D-manno-heptose from D-glycero-beta-D-manno-heptose 7-phosphate: step 4/4. Its pathway is bacterial outer membrane biogenesis; LOS core biosynthesis. In terms of biological role, catalyzes the interconversion between ADP-D-glycero-beta-D-manno-heptose and ADP-L-glycero-beta-D-manno-heptose via an epimerization at carbon 6 of the heptose. This chain is ADP-L-glycero-D-manno-heptose-6-epimerase, found in Neisseria meningitidis serogroup B (strain ATCC BAA-335 / MC58).